We begin with the raw amino-acid sequence, 176 residues long: Crossover junction endodeoxyribonuclease RuvC (176 aa).

Active-site residues include Asp7, Glu67, and Asp139. The Mg(2+) site is built by Asp7, Glu67, and Asp139.

It belongs to the RuvC family. In terms of assembly, homodimer which binds Holliday junction (HJ) DNA. The HJ becomes 2-fold symmetrical on binding to RuvC with unstacked arms; it has a different conformation from HJ DNA in complex with RuvA. In the full resolvosome a probable DNA-RuvA(4)-RuvB(12)-RuvC(2) complex forms which resolves the HJ. Requires Mg(2+) as cofactor.

It localises to the cytoplasm. It carries out the reaction Endonucleolytic cleavage at a junction such as a reciprocal single-stranded crossover between two homologous DNA duplexes (Holliday junction).. The RuvA-RuvB-RuvC complex processes Holliday junction (HJ) DNA during genetic recombination and DNA repair. Endonuclease that resolves HJ intermediates. Cleaves cruciform DNA by making single-stranded nicks across the HJ at symmetrical positions within the homologous arms, yielding a 5'-phosphate and a 3'-hydroxyl group; requires a central core of homology in the junction. The consensus cleavage sequence is 5'-(A/T)TT(C/G)-3'. Cleavage occurs on the 3'-side of the TT dinucleotide at the point of strand exchange. HJ branch migration catalyzed by RuvA-RuvB allows RuvC to scan DNA until it finds its consensus sequence, where it cleaves and resolves the cruciform DNA. In Pelobacter propionicus (strain DSM 2379 / NBRC 103807 / OttBd1), this protein is Crossover junction endodeoxyribonuclease RuvC.